Reading from the N-terminus, the 196-residue chain is Gastrula zinc finger protein xLCGF3.1 (196 aa).

7 C2H2-type zinc fingers span residues 6 to 28, 34 to 56, 62 to 84, 90 to 112, 118 to 140, 146 to 168, and 174 to 196; these read FMCT…HMTH, FTCT…QTIH, FTCI…YMTH, FTCT…QTMH, LTCT…QRVH, FTCT…QTVH, and FTCT…QIVH.

The protein belongs to the krueppel C2H2-type zinc-finger protein family.

Its subcellular location is the nucleus. In terms of biological role, may be involved in transcriptional regulation. The sequence is that of Gastrula zinc finger protein xLCGF3.1 from Xenopus laevis (African clawed frog).